The sequence spans 25 residues: Plasticin-L1 (25 aa).

It belongs to the frog skin active peptide (FSAP) family. Plasticin subfamily. In terms of tissue distribution, expressed by the skin glands.

The protein localises to the secreted. It localises to the target cell membrane. May play an immunomodulatory role in frog skin in response to microbial pathogens, since it increases the production of the pro-inflammatory cytokines TNF-alpha, IL-1 beta, IL-12, and IL-23 by mouse peritoneal macrophages and has no effect on the production of the anti-inflammatory cytokine IL-10. It is not known whether stimulation of cytokine production arises from a non-specific interaction of the peptide with the macrophage membrane or from interaction with a specific receptor. Shows a low activity in stimulating insulin release from rat BRIN-BD11 beta cells, and acts without loss of integrity of the plasma membrane. Shows a marked affinity for both neutral and anionic membranes models. Does not show antibacterial (E.coli and S.aureus). Does not show hemolytic activity against human erythrocytes. The polypeptide is Plasticin-L1 (Leptodactylus laticeps (Santa Fe frog)).